Reading from the N-terminus, the 873-residue chain is Nitrate reductase [NADPH] (873 aa).

The interval 30 to 61 (TELDTADIPLPPPSKEPTEVLSLDKTTPDSHV) is disordered. Cys-150 is a Mo-molybdopterin binding site. The Cytochrome b5 heme-binding domain occupies 512 to 587 (TRIIDLEEFK…MPDYHIGTLD (76 aa)). The heme site is built by His-547 and His-570. Residues 616 to 729 (KAWTKATLTK…KGPTGRFEYL (114 aa)) form the FAD-binding FR-type domain. Residues 672–675 (RSYT), 689–693 (LIKIY), 703–705 (KMT), and Thr-756 each bind FAD. NADP(+) is bound at residue 843–852 (MVLVCGPEAM).

The protein belongs to the nitrate reductase family. Homodimer. FAD serves as cofactor. It depends on heme as a cofactor. Mo-molybdopterin is required as a cofactor.

The catalysed reaction is nitrite + NADP(+) + H2O = nitrate + NADPH + H(+). Nitrate reductase is a key enzyme involved in the first step of nitrate assimilation in plants, fungi and bacteria. This chain is Nitrate reductase [NADPH] (niaD), found in Emericella nidulans (strain FGSC A4 / ATCC 38163 / CBS 112.46 / NRRL 194 / M139) (Aspergillus nidulans).